A 202-amino-acid chain; its full sequence is MNTVVGRRIINGRRRPRRQTRRAQRPQPVVVVQTSRATQRRPRRRRRGNNRTGRTVPTRGAGSSETFVFSKDNLAGSSSGAITFGPSLSDCPAFSNGMLKAYHEYKISMVILEFVSEASSQNSGSIAYELDPHCKLNSLSSTINKFGITKPGKRAFTASYINGTEWHDVAEDQFRILYKGNGSSSIAGSFRITIKCQFHNPK.

Residues 1-64 (MNTVVGRRII…TVPTRGAGSS (64 aa)) are disordered. A compositionally biased stretch (basic residues) spans 10–24 (INGRRRPRRQTRRAQ). Residues 25–36 (RPQPVVVVQTSR) show a composition bias toward low complexity. Over residues 38–49 (TQRRPRRRRRGN) the composition is skewed to basic residues. Over residues 50–60 (NRTGRTVPTRG) the composition is skewed to low complexity.

This sequence belongs to the luteoviruses capsid protein family.

Its subcellular location is the virion. In terms of biological role, major capsid protein that self-assembles to form an icosahedral capsid with a T=3 symmetry, about 23 nm in diameter, and consisting of 180 capsid proteins monomers. Most of the 180 monomers are the major capsid protein, but a small percentage contain the minor capsid protein, which has a long C-terminal extension. This Turnip yellows virus (isolate FL-1) (TuYV) protein is Major capsid protein.